A 144-amino-acid chain; its full sequence is Transcription antitermination protein NusB (144 aa).

This sequence belongs to the NusB family.

Involved in transcription antitermination. Required for transcription of ribosomal RNA (rRNA) genes. Binds specifically to the boxA antiterminator sequence of the ribosomal RNA (rrn) operons. The polypeptide is Transcription antitermination protein NusB (Dictyoglomus turgidum (strain DSM 6724 / Z-1310)).